The chain runs to 425 residues: Serine--tRNA ligase (425 aa).

228–230 (TSE) is a binding site for L-serine. 259–261 (RSE) is a binding site for ATP. Position 282 (E282) interacts with L-serine. ATP is bound at residue 346–349 (EISS). S384 is an L-serine binding site.

This sequence belongs to the class-II aminoacyl-tRNA synthetase family. Type-1 seryl-tRNA synthetase subfamily. Homodimer. The tRNA molecule binds across the dimer.

Its subcellular location is the cytoplasm. The enzyme catalyses tRNA(Ser) + L-serine + ATP = L-seryl-tRNA(Ser) + AMP + diphosphate + H(+). It carries out the reaction tRNA(Sec) + L-serine + ATP = L-seryl-tRNA(Sec) + AMP + diphosphate + H(+). It participates in aminoacyl-tRNA biosynthesis; selenocysteinyl-tRNA(Sec) biosynthesis; L-seryl-tRNA(Sec) from L-serine and tRNA(Sec): step 1/1. In terms of biological role, catalyzes the attachment of serine to tRNA(Ser). Is also able to aminoacylate tRNA(Sec) with serine, to form the misacylated tRNA L-seryl-tRNA(Sec), which will be further converted into selenocysteinyl-tRNA(Sec). The polypeptide is Serine--tRNA ligase (Ehrlichia ruminantium (strain Gardel)).